We begin with the raw amino-acid sequence, 276 residues long: Eukaryotic translation initiation factor 3 subunit G (276 aa).

Serine 148 bears the Phosphoserine mark. The 80-residue stretch at 195–274 (TTLKISQLNS…LILHLEWSKK (80 aa)) folds into the RRM domain.

It belongs to the eIF-3 subunit G family. In terms of assembly, component of the eukaryotic translation initiation factor 3 (eIF-3) complex.

The protein localises to the cytoplasm. Its function is as follows. RNA-binding component of the eukaryotic translation initiation factor 3 (eIF-3) complex, which is involved in protein synthesis of a specialized repertoire of mRNAs and, together with other initiation factors, stimulates binding of mRNA and methionyl-tRNAi to the 40S ribosome. The eIF-3 complex specifically targets and initiates translation of a subset of mRNAs involved in cell proliferation. This subunit can bind 18S rRNA. The polypeptide is Eukaryotic translation initiation factor 3 subunit G (Debaryomyces hansenii (strain ATCC 36239 / CBS 767 / BCRC 21394 / JCM 1990 / NBRC 0083 / IGC 2968) (Yeast)).